The primary structure comprises 162 residues: uncharacterized protein (162 aa).

This is an uncharacterized protein from Bacillus subtilis (strain 168).